The sequence spans 141 residues: ATP synthase epsilon chain (141 aa).

The protein belongs to the ATPase epsilon chain family. F-type ATPases have 2 components, CF(1) - the catalytic core - and CF(0) - the membrane proton channel. CF(1) has five subunits: alpha(3), beta(3), gamma(1), delta(1), epsilon(1). CF(0) has three main subunits: a, b and c.

It is found in the cell inner membrane. Produces ATP from ADP in the presence of a proton gradient across the membrane. In Bordetella petrii (strain ATCC BAA-461 / DSM 12804 / CCUG 43448), this protein is ATP synthase epsilon chain.